The following is a 236-amino-acid chain: Small ribosomal subunit protein uS2c (236 aa).

Belongs to the universal ribosomal protein uS2 family.

It localises to the plastid. The protein localises to the chloroplast. The protein is Small ribosomal subunit protein uS2c (rps2) of Illicium oligandrum (Star anise).